A 205-amino-acid polypeptide reads, in one-letter code: Transcriptional regulatory protein PdtaR (205 aa).

The 115-residue stretch at 15–129 folds into the Response regulatory domain; the sequence is RVLIAEDEAL…DLIPAIELAV (115 aa). Position 65 is a 4-aspartylphosphate (aspartate 65). Residues 135–196 enclose the ANTAR domain; it reads ITALEGEVAT…TMKRVAEVVL (62 aa).

Phosphorylated and activated by PdtaS.

It localises to the cytoplasm. In terms of biological role, member of the two-component regulatory system PdtaR/PdtaS. This two-component system plays an essential role in mycobacterial adaptation to poor nutrient conditions. PdtaR probably acts at the level of transcriptional antitermination rather than transcriptional initiation. In addition, the PdtaR/PdtaS two-component system controls copper and nitric oxide (NO) resistance downstream of the intramembrane protease Rip1. This coupled Rip1/PdtaS/PdtaR circuit controls NO resistance and acute lung infection in mice by relieving PdtaR/PdtaS-mediated repression of isonitrile chalkophore biosynthesis. Two signals are required to fully inactivate the PdtaR/PdtaS system and mediate NO resistance: a cytoplasmic inhibitory signal through the PdtaS kinase mediated by direct sensing of NO and the production of PPE1-5', an NO-induced small RNA, to sequester PdtaR. This chain is Transcriptional regulatory protein PdtaR (pdtaR), found in Mycobacterium tuberculosis (strain CDC 1551 / Oshkosh).